Reading from the N-terminus, the 570-residue chain is Small ribosomal subunit protein uS2c (570 aa).

The segment at 1–306 (MLNKKPPYLI…IKLNPLSTPQ (306 aa)) is N-terminal extension. TRAM domains are found at residues 28-89 (KLIP…KLIK) and 104-169 (ALTP…VATV).

Belongs to the universal ribosomal protein uS2 family.

It localises to the plastid. The protein resides in the chloroplast. The sequence is that of Small ribosomal subunit protein uS2c (rps2-1) from Chlamydomonas reinhardtii (Chlamydomonas smithii).